We begin with the raw amino-acid sequence, 816 residues long: Phosphatidylinositol 4-kinase beta (816 aa).

3 disordered regions span residues 1–30 (MGDT…GSLL), 101–120 (EDEM…RRRR), and 248–318 (AHRK…SFSS). Glycine 2 carries the post-translational modification N-acetylglycine. Positions 2–68 (GDTVVEPAPL…VKLLHGGMAV (67 aa)) are interaction with ACBD3. The PIK helical domain maps to 52–242 (CQDVLEKVKL…GTKLRKLILS (191 aa)). Serine 258 carries the post-translational modification Phosphoserine. Residue threonine 263 is modified to Phosphothreonine. Phosphoserine is present on residues serine 266, serine 275, serine 277, serine 284, and serine 294. Composition is skewed to polar residues over residues 278-297 (DATA…SNPK) and 306-318 (SSST…SFSS). Serine 428 is subject to Phosphoserine. At threonine 438 the chain carries Phosphothreonine. Phosphoserine is present on serine 511. Residues threonine 517 and threonine 519 each carry the phosphothreonine modification. Residues 535-801 (EPWQEKVRRI…MVDGSMRSIT (267 aa)) enclose the PI3K/PI4K catalytic domain. The segment at 541 to 547 (VRRIREG) is G-loop. The interval 668 to 676 (QVKDRHNGN) is catalytic loop. The segment at 687–711 (HIDFGFILSSSPRNLGFETSAFKLT) is activation loop.

Belongs to the PI3/PI4-kinase family. Type III PI4K subfamily. Interacts with ARF1 and ARF3 in the Golgi complex, but not with ARF4, ARF5 or ARF6. Interacts with NCS1/FREQ in a calcium-independent manner. Interacts with CALN1/CABP8 and CALN2/CABP7; in a calcium-dependent manner; this interaction competes with NCS1/FREQ binding. Interacts with ACBD3. Interacts with ARMH3, YWHAB, YWHAE, YWHAG, YWHAH, YWHAQ, YWHAZ and SFN. Interacts with GGA2 (via VHS domain); the interaction is important for PI4KB location at the Golgi apparatus membrane. Interacts with ATG9A. It depends on Mg(2+) as a cofactor. The cofactor is Mn(2+).

The protein localises to the endomembrane system. Its subcellular location is the mitochondrion outer membrane. It localises to the rough endoplasmic reticulum membrane. The protein resides in the golgi apparatus. It is found in the golgi apparatus membrane. The catalysed reaction is a 1,2-diacyl-sn-glycero-3-phospho-(1D-myo-inositol) + ATP = a 1,2-diacyl-sn-glycero-3-phospho-(1D-myo-inositol 4-phosphate) + ADP + H(+). Its activity is regulated as follows. Inhibited by wortmannin. Increased kinase activity upon interaction with NCS1/FREQ. Functionally, phosphorylates phosphatidylinositol (PI) in the first committed step in the production of the second messenger inositol-1,4,5,-trisphosphate (PIP). May regulate Golgi disintegration/reorganization during mitosis, possibly via its phosphorylation. Involved in Golgi-to-plasma membrane trafficking. In Plecturocebus moloch (Dusky titi monkey), this protein is Phosphatidylinositol 4-kinase beta (PI4KB).